Reading from the N-terminus, the 542-residue chain is MARYVFITGGVVSSLGKGIAAAALAALLQARGYRVRIRKLDPYLNVDPGTMSPYQHGEVFVTDDGAETDLDLGHYERFTGRPANQQDNITTGRIYRNIIEKERRGDYLGATVQVIPHVTDEIKNFVLQGNEDYDFVLCEIGGTVGDIEAMPFLEAIRQLGNELPRGTAVYIHLTLMPYIPAAGELKTKPTQHSVKELRSIGIAPDILLVRADREIPESERRKLSLFCNVRESAVIQALDVATIYDVPIAYHKEGLDSEVLSAFGIDPAPKPRMDRWEEVSHRLHNPEGEVTIAVVGKYTGLKDAYKSLIEALHHGGLANKVKVNLDWIEAEVFESEDPAPYLEKVHGILVPGGFGERGAEGKILAAKFARERKVPYFGICFGMQMACIEAARNLVGIEDASSSEFGPTREPVVGLMTEWLKGNMLEKRAAAGDLGGTMRLGAYEAVLKPDSKIAQIYGSTDIHERHRHRYEVNIDYKDRLEAAGLNFAGMSPDGVLPETVEYADHPWFIGVQYHPELKSRPFEPHPLFASFIEAAIEQSRLV.

Residues 1 to 265 form an amidoligase domain region; sequence MARYVFITGG…DSEVLSAFGI (265 aa). Residue serine 13 coordinates CTP. Serine 13 provides a ligand contact to UTP. ATP is bound at residue 14-19; that stretch reads SLGKGI. Tyrosine 54 provides a ligand contact to L-glutamine. An ATP-binding site is contributed by aspartate 71. Mg(2+) is bound by residues aspartate 71 and glutamate 139. CTP contacts are provided by residues 146–148, 186–191, and lysine 222; these read DIE and KTKPTQ. UTP is bound by residues 186–191 and lysine 222; that span reads KTKPTQ. Residues 291-541 enclose the Glutamine amidotransferase type-1 domain; it reads TIAVVGKYTG…IEAAIEQSRL (251 aa). An L-glutamine-binding site is contributed by glycine 353. Cysteine 380 acts as the Nucleophile; for glutamine hydrolysis in catalysis. L-glutamine contacts are provided by residues 381 to 384, glutamate 404, and arginine 469; that span reads FGMQ. Residues histidine 514 and glutamate 516 contribute to the active site.

It belongs to the CTP synthase family. As to quaternary structure, homotetramer.

The enzyme catalyses UTP + L-glutamine + ATP + H2O = CTP + L-glutamate + ADP + phosphate + 2 H(+). It catalyses the reaction L-glutamine + H2O = L-glutamate + NH4(+). The catalysed reaction is UTP + NH4(+) + ATP = CTP + ADP + phosphate + 2 H(+). It functions in the pathway pyrimidine metabolism; CTP biosynthesis via de novo pathway; CTP from UDP: step 2/2. Allosterically activated by GTP, when glutamine is the substrate; GTP has no effect on the reaction when ammonia is the substrate. The allosteric effector GTP functions by stabilizing the protein conformation that binds the tetrahedral intermediate(s) formed during glutamine hydrolysis. Inhibited by the product CTP, via allosteric rather than competitive inhibition. In terms of biological role, catalyzes the ATP-dependent amination of UTP to CTP with either L-glutamine or ammonia as the source of nitrogen. Regulates intracellular CTP levels through interactions with the four ribonucleotide triphosphates. The polypeptide is CTP synthase (Brucella suis (strain ATCC 23445 / NCTC 10510)).